The following is a 156-amino-acid chain: ATP synthase subunit b (156 aa).

Residues 7–27 (LIGQLIAFAIFVWFCMKYVWP) traverse the membrane as a helical segment.

Belongs to the ATPase B chain family. In terms of assembly, F-type ATPases have 2 components, F(1) - the catalytic core - and F(0) - the membrane proton channel. F(1) has five subunits: alpha(3), beta(3), gamma(1), delta(1), epsilon(1). F(0) has three main subunits: a(1), b(2) and c(10-14). The alpha and beta chains form an alternating ring which encloses part of the gamma chain. F(1) is attached to F(0) by a central stalk formed by the gamma and epsilon chains, while a peripheral stalk is formed by the delta and b chains.

It localises to the cell inner membrane. Its function is as follows. F(1)F(0) ATP synthase produces ATP from ADP in the presence of a proton or sodium gradient. F-type ATPases consist of two structural domains, F(1) containing the extramembraneous catalytic core and F(0) containing the membrane proton channel, linked together by a central stalk and a peripheral stalk. During catalysis, ATP synthesis in the catalytic domain of F(1) is coupled via a rotary mechanism of the central stalk subunits to proton translocation. In terms of biological role, component of the F(0) channel, it forms part of the peripheral stalk, linking F(1) to F(0). The chain is ATP synthase subunit b from Histophilus somni (strain 129Pt) (Haemophilus somnus).